Reading from the N-terminus, the 999-residue chain is Ulvan lyase, long isoform (999 aa).

The first 21 residues, Met-1–Ala-21, serve as a signal peptide directing secretion. Substrate is bound at residue Ser-126–His-127. The Proton donor/acceptor role is filled by His-127. 3 residues coordinate Ca(2+): Asp-189, Asp-199, and Lys-201. Tyr-280 and Arg-297 together coordinate substrate. 3 residues coordinate Ca(2+): Asp-300, Asp-303, and Tyr-305. Position 361 (Tyr-361) interacts with substrate.

The protein belongs to the polysaccharide lyase 24 family.

Functionally, ulvan lyase involved in ulvan degradation. Ulvan is the main polysaccharide component of the Ulvales (green seaweed) cell wall. It is composed of disaccharide building blocks comprising 3-sulfated rhamnose (Rha3S) linked to D-glucuronic acid (GlcA), L-iduronic acid (IduA), or D-xylose (Xyl). Ulvan lyase catalyzes preferentially the endolytic cleavage of the glycosidic bond between Rha3S and the uronic acid GlcA, but not IduA, producing oligosaccharides that have unsaturated 4-deoxy-L-threo-hex-4-enopyranosiduronic acid (deltaUA) at the non-reducing end. The most abundant end products in the degradation of the ulvan polysaccharide were deltaUA-Rha3S disaccharides and deltaUA-Rha3S-IduA-Rha3S and deltaUA-Rha3S-Xyl-Rha3S tetrasaccharides. This is Ulvan lyase, long isoform from Alteromonas sp. (strain LOR).